A 338-amino-acid polypeptide reads, in one-letter code: Methionyl-tRNA formyltransferase (338 aa).

Ser-110–Pro-113 contacts (6S)-5,6,7,8-tetrahydrofolate.

This sequence belongs to the Fmt family.

The enzyme catalyses L-methionyl-tRNA(fMet) + (6R)-10-formyltetrahydrofolate = N-formyl-L-methionyl-tRNA(fMet) + (6S)-5,6,7,8-tetrahydrofolate + H(+). Attaches a formyl group to the free amino group of methionyl-tRNA(fMet). The formyl group appears to play a dual role in the initiator identity of N-formylmethionyl-tRNA by promoting its recognition by IF2 and preventing the misappropriation of this tRNA by the elongation apparatus. This chain is Methionyl-tRNA formyltransferase, found in Synechococcus sp. (strain CC9605).